The following is a 124-amino-acid chain: Large ribosomal subunit protein bL12 (124 aa).

This sequence belongs to the bacterial ribosomal protein bL12 family. In terms of assembly, homodimer. Part of the ribosomal stalk of the 50S ribosomal subunit. Forms a multimeric L10(L12)X complex, where L10 forms an elongated spine to which 2 to 4 L12 dimers bind in a sequential fashion. Binds GTP-bound translation factors.

In terms of biological role, forms part of the ribosomal stalk which helps the ribosome interact with GTP-bound translation factors. Is thus essential for accurate translation. This Burkholderia cenocepacia (strain ATCC BAA-245 / DSM 16553 / LMG 16656 / NCTC 13227 / J2315 / CF5610) (Burkholderia cepacia (strain J2315)) protein is Large ribosomal subunit protein bL12.